The sequence spans 774 residues: Armadillo-like helical domain-containing protein 4 (774 aa).

The first 27 residues, 1 to 27 (MRGPIVLHICLAFCSLLLFSVATQCLA), serve as a signal peptide directing secretion. The Extracellular segment spans residues 28 to 714 (FPKIERRREI…KDKAGYMSGM (687 aa)). The segment covering 41 to 52 (HAEKGQSDKMNT) has biased composition (basic and acidic residues). 2 disordered regions span residues 41–63 (HAEKGQSDKMNTDDLENSSVTSK) and 97–135 (QPGQAGLMQTERPGVSTPTESGVPSAEEVFGSSQPERIS). N-linked (GlcNAc...) asparagine glycosylation occurs at Asn-57. Asn-189 carries N-linked (GlcNAc...) asparagine glycosylation. Positions 221–233 (KTEKFEADTDHRT) are enriched in basic and acidic residues. 2 disordered regions span residues 221–275 (KTEK…QPLE) and 600–669 (ASYG…PGLE). Over residues 258-275 (SQMTADNTQAAATKQPLE) the composition is skewed to polar residues. A compositionally biased stretch (acidic residues) spans 607 to 651 (LESEEGQEDEDEEDEEDEDEEEEDEEEDEEDKDADSLDEGLDGDT). A helical membrane pass occupies residues 715 to 735 (LVPVGVGIAGALFILGALYSI). Topologically, residues 736–774 (KVMNRRRRNGFKRHKRKQREFNSMQDRVMLLADSSEDEF) are cytoplasmic. Ser-769 and Ser-770 each carry phosphoserine.

In terms of assembly, interacts with IL6ST; this interaction prevents IL6ST protein homodimerization and bridges ARMH4 with IL6R and STAT3 and therefore inhibits phosphorylation of STAT3 at 'Tyr-705'. Interacts (via cytoplasmic tail) with RICTOR; this interaction bridges ARMH4 to the mTORC2 complex and inhibits the mTORC2 kinase activity. Expressed in podocytes.

It is found in the membrane. May modulate immune response and may play a role in inflammation. Down-modulates STAT3 signaling throught direct interaction with IL6ST, resulting in the inhibition of phosphorylation of STAT3 at 'Tyr-705'. May negatively regulates AKT signaling by modulating the activity of mTORC2 complex through RICTOR interaction. The sequence is that of Armadillo-like helical domain-containing protein 4 from Homo sapiens (Human).